The chain runs to 387 residues: S-adenosylmethionine synthase (387 aa).

Residue histidine 16 coordinates ATP. Residue aspartate 18 coordinates Mg(2+). K(+) is bound at residue glutamate 44. Residues glutamate 57 and glutamine 100 each coordinate L-methionine. The tract at residues 100 to 110 (QSPDIAQGVDR) is flexible loop. Residues 167-169 (DAK), 232-233 (RF), aspartate 241, 247-248 (RK), alanine 264, and lysine 268 each bind ATP. Aspartate 241 is an L-methionine binding site. Lysine 272 serves as a coordination point for L-methionine.

The protein belongs to the AdoMet synthase family. As to quaternary structure, homotetramer; dimer of dimers. Mg(2+) is required as a cofactor. It depends on K(+) as a cofactor.

It is found in the cytoplasm. It catalyses the reaction L-methionine + ATP + H2O = S-adenosyl-L-methionine + phosphate + diphosphate. Its pathway is amino-acid biosynthesis; S-adenosyl-L-methionine biosynthesis; S-adenosyl-L-methionine from L-methionine: step 1/1. Functionally, catalyzes the formation of S-adenosylmethionine (AdoMet) from methionine and ATP. The overall synthetic reaction is composed of two sequential steps, AdoMet formation and the subsequent tripolyphosphate hydrolysis which occurs prior to release of AdoMet from the enzyme. This Cupriavidus pinatubonensis (strain JMP 134 / LMG 1197) (Cupriavidus necator (strain JMP 134)) protein is S-adenosylmethionine synthase.